A 337-amino-acid chain; its full sequence is Na(+)/H(+) exchange regulatory cofactor NHE-RF2 (337 aa).

In terms of domain architecture, PDZ 1 spans 11 to 91 (LCRLVRGEQG…QTQLLVVDKE (81 aa)). Residues 112–145 (LPPAHNPWEPKPDWACSGSLGSDTGQKDVNGPPR) form a disordered region. Phosphoserine is present on residues Ser130, Ser183, Ser186, Ser254, Ser269, Ser280, and Ser303. The PDZ 2 domain maps to 151–231 (LCHLRRGPQG…EARLLVVDPE (81 aa)). A disordered region spans residues 242-337 (VPTEEHVEGP…NRKREIFSNF (96 aa)). The segment covering 255-275 (PVTNGTSPAQLNGGSVCSSRS) has biased composition (polar residues). Basic and acidic residues predominate over residues 327–337 (WNRKREIFSNF).

Homodimer, and heterodimer with NHERF1. Binds PDZK1. Interacts with SRY. Binds ADRB2, SLC9A3, P2RY1, P2YR2, RDX and LPAR2. Interacts with MCC. Found in a complex with EZR, PODXL and NHERF2. Interacts (via the PDZ domains) with PODXL (via the C-terminal PDZ-binding motif DTHL); interaction is detected in glomerular epithelium cells. Interacts with SGK1 and KCNJ1/ROMK1. Interacts (via the PDZ domains) with SLC26A6.

Its subcellular location is the endomembrane system. It is found in the nucleus. The protein localises to the apical cell membrane. In terms of biological role, scaffold protein that connects plasma membrane proteins with members of the ezrin/moesin/radixin family and thereby helps to link them to the actin cytoskeleton and to regulate their surface expression. Necessary for cAMP-mediated phosphorylation and inhibition of SLC9A3. May also act as scaffold protein in the nucleus. The chain is Na(+)/H(+) exchange regulatory cofactor NHE-RF2 (Nherf2) from Mus musculus (Mouse).